The following is a 517-amino-acid chain: Ascochitine biosynthesis cluster MFS transporter (517 aa).

A compositionally biased stretch (basic and acidic residues) spans 1-12; that stretch reads MSPDSRDPEAQR. Positions 1-45 are disordered; the sequence is MSPDSRDPEAQRDVGLTKNTSSVNIPLESVKTDKTSNASPIMGPG. Asn-19 carries N-linked (GlcNAc...) asparagine glycosylation. A run of 12 helical transmembrane segments spans residues 75 to 95, 111 to 131, 141 to 161, 172 to 192, 204 to 224, 232 to 252, 308 to 328, 347 to 367, 390 to 410, 421 to 441, 457 to 475, and 485 to 505; these read WVITWLLSFLNVWVTFSSTIF, VVMTLGVSLTVLGFAVGPLIW, LTPFYFGYAVFCIFQIPVGVA, FFIGFFGTSAMAVTPGVLADI, VYAAAAFIGPIFGPIVGGFVV, WTAWITLILASAFGLAALVFV, ILLLVTLYISLVYGVLYLFFV, ALPLLAVMLGTLAGCLTILFV, LMMVGSVSLPIGLFWFGWTSS, AGFPIGIGLALIWVQGLSFLI, LIRSAVGAAFPLFGAPMYH, and LLGFLSVAMIPIPVAFYYYGP.

It belongs to the major facilitator superfamily. CAR1 family.

Its subcellular location is the membrane. MFS transporter; part of the gene cluster that mediates the biosynthesis the mycotoxin ascochitine, an o-quinone methide that plays a possible protective role against other microbial competitors in nature and is considered to be important for pathogenicity of legume-associated Didymella species. This Didymella fabae (Leaf and pod spot disease fungus) protein is Ascochitine biosynthesis cluster MFS transporter.